A 172-amino-acid chain; its full sequence is Adenine phosphoribosyltransferase (172 aa).

It belongs to the purine/pyrimidine phosphoribosyltransferase family. As to quaternary structure, homodimer.

The protein localises to the cytoplasm. It carries out the reaction AMP + diphosphate = 5-phospho-alpha-D-ribose 1-diphosphate + adenine. It participates in purine metabolism; AMP biosynthesis via salvage pathway; AMP from adenine: step 1/1. In terms of biological role, catalyzes a salvage reaction resulting in the formation of AMP, that is energically less costly than de novo synthesis. In Latilactobacillus sakei subsp. sakei (strain 23K) (Lactobacillus sakei subsp. sakei), this protein is Adenine phosphoribosyltransferase.